A 61-amino-acid polypeptide reads, in one-letter code: Antimicrobial peptide 1 (61 aa).

A signal peptide spans 1 to 24 (LPVAFLKFAIVLILFIAMSAMIEA). Pyrrolidone carboxylic acid is present on Gln-25. 3 disulfide bridges follow: Cys-26/Cys-43, Cys-33/Cys-47, and Cys-42/Cys-58.

Belongs to the AMP family. As to quaternary structure, homodimer. Three disulfide bonds are present. In terms of tissue distribution, found only in seeds.

The protein localises to the secreted. In terms of biological role, possesses antifungal activity and is also active on two tested Gram-positive bacteria but is non-toxic for Gram-negative bacteria and cultured human cells. This chain is Antimicrobial peptide 1 (AMP1), found in Mirabilis jalapa (Garden four-o'clock).